Here is a 419-residue protein sequence, read N- to C-terminus: Glycine, glutamate and proline-rich protein (419 aa).

Residues 1–16 (MKCLVALFLSLSLVAC) form the signal peptide. A disordered region spans residues 74–152 (VERESEEAEG…VDMCAGESRR (79 aa)). Residues 76 to 85 (RESEEAEGEG) show a composition bias toward acidic residues. A compositionally biased stretch (basic and acidic residues) spans 86-130 (TDGRGGGEGEREGWGGEREGGEGEREGGEGEREGREGEREGKSSE).

It in the C-terminal section; belongs to the glycosyl hydrolase 23 family. In terms of tissue distribution, component of the acid-insoluble organic matrix of calcified layers of the shell (at protein level).

The protein localises to the secreted. This Lottia gigantea (Giant owl limpet) protein is Glycine, glutamate and proline-rich protein.